Reading from the N-terminus, the 314-residue chain is Probable cell division protein WhiA (314 aa).

A DNA-binding region (H-T-H motif) is located at residues 277–311 (TLKELGEKMPSGAISKSGINHRLRKLNQLAEGYQQ).

The protein belongs to the WhiA family.

In terms of biological role, involved in cell division and chromosome segregation. The sequence is that of Probable cell division protein WhiA from Latilactobacillus sakei subsp. sakei (strain 23K) (Lactobacillus sakei subsp. sakei).